The chain runs to 230 residues: Demethylmenaquinone methyltransferase (230 aa).

S-adenosyl-L-methionine-binding positions include Thr57, Asp77, 101–102, and Ser118; that span reads DI.

It belongs to the class I-like SAM-binding methyltransferase superfamily. MenG/UbiE family.

The catalysed reaction is a 2-demethylmenaquinol + S-adenosyl-L-methionine = a menaquinol + S-adenosyl-L-homocysteine + H(+). Its pathway is quinol/quinone metabolism; menaquinone biosynthesis; menaquinol from 1,4-dihydroxy-2-naphthoate: step 2/2. Its function is as follows. Methyltransferase required for the conversion of demethylmenaquinol (DMKH2) to menaquinol (MKH2). The protein is Demethylmenaquinone methyltransferase of Chlamydia felis (strain Fe/C-56) (Chlamydophila felis).